The following is a 338-amino-acid chain: Ketol-acid reductoisomerase (NADP(+)) (338 aa).

In terms of domain architecture, KARI N-terminal Rossmann spans 1 to 181 (MKVFYDKDCD…GGGRTGIIET (181 aa)). NADP(+) contacts are provided by residues 24-27 (YGSQ), arginine 47, serine 50, threonine 52, and 82-85 (DEFQ). Histidine 107 is a catalytic residue. Glycine 133 provides a ligand contact to NADP(+). Residues 182–327 (TFKDETETDL…EQLRSMMPWI (146 aa)) form the KARI C-terminal knotted domain. The Mg(2+) site is built by aspartate 190, glutamate 194, glutamate 226, and glutamate 230. A substrate-binding site is contributed by serine 251.

Belongs to the ketol-acid reductoisomerase family. Mg(2+) is required as a cofactor.

It carries out the reaction (2R)-2,3-dihydroxy-3-methylbutanoate + NADP(+) = (2S)-2-acetolactate + NADPH + H(+). The enzyme catalyses (2R,3R)-2,3-dihydroxy-3-methylpentanoate + NADP(+) = (S)-2-ethyl-2-hydroxy-3-oxobutanoate + NADPH + H(+). It functions in the pathway amino-acid biosynthesis; L-isoleucine biosynthesis; L-isoleucine from 2-oxobutanoate: step 2/4. Its pathway is amino-acid biosynthesis; L-valine biosynthesis; L-valine from pyruvate: step 2/4. Involved in the biosynthesis of branched-chain amino acids (BCAA). Catalyzes an alkyl-migration followed by a ketol-acid reduction of (S)-2-acetolactate (S2AL) to yield (R)-2,3-dihydroxy-isovalerate. In the isomerase reaction, S2AL is rearranged via a Mg-dependent methyl migration to produce 3-hydroxy-3-methyl-2-ketobutyrate (HMKB). In the reductase reaction, this 2-ketoacid undergoes a metal-dependent reduction by NADPH to yield (R)-2,3-dihydroxy-isovalerate. The sequence is that of Ketol-acid reductoisomerase (NADP(+)) from Pseudomonas fluorescens (strain ATCC BAA-477 / NRRL B-23932 / Pf-5).